The primary structure comprises 593 residues: NADH-quinone oxidoreductase subunit C/D (593 aa).

The segment at 1-184 is NADH dehydrogenase I subunit C; it reads MTADNAIFIP…DPYSLTLAKQ (184 aa). The segment at 208-593 is NADH dehydrogenase I subunit D; it reads DYMFLNLGPN…IDFVMADVDR (386 aa).

This sequence in the N-terminal section; belongs to the complex I 30 kDa subunit family. It in the C-terminal section; belongs to the complex I 49 kDa subunit family. In terms of assembly, NDH-1 is composed of 13 different subunits. Subunits NuoB, CD, E, F, and G constitute the peripheral sector of the complex.

It localises to the cell inner membrane. It carries out the reaction a quinone + NADH + 5 H(+)(in) = a quinol + NAD(+) + 4 H(+)(out). Its function is as follows. NDH-1 shuttles electrons from NADH, via FMN and iron-sulfur (Fe-S) centers, to quinones in the respiratory chain. The immediate electron acceptor for the enzyme in this species is believed to be ubiquinone. Couples the redox reaction to proton translocation (for every two electrons transferred, four hydrogen ions are translocated across the cytoplasmic membrane), and thus conserves the redox energy in a proton gradient. The polypeptide is NADH-quinone oxidoreductase subunit C/D (Pseudomonas putida (strain ATCC 47054 / DSM 6125 / CFBP 8728 / NCIMB 11950 / KT2440)).